Here is a 971-residue protein sequence, read N- to C-terminus: Kinesin-like protein KIN-14C (971 aa).

Positions A14 to A119 constitute a Calponin-homology (CH) domain. Positions I272–E357 form a coiled coil. Positions N472–V799 constitute a Kinesin motor domain. Position 556–563 (G556–T563) interacts with ATP. Residues E809–S844 are a coiled coil. Polar residues predominate over residues L839–G881. The interval L839–R971 is disordered.

It belongs to the TRAFAC class myosin-kinesin ATPase superfamily. Kinesin family. KIN-14 subfamily.

The sequence is that of Kinesin-like protein KIN-14C from Oryza sativa subsp. japonica (Rice).